Reading from the N-terminus, the 283-residue chain is Thymidylate synthase (283 aa).

Arg22 serves as a coordination point for dUMP. The active-site Nucleophile is the Cys160. DUMP is bound by residues 180-183 (RSCD), Asn191, and 221-223 (HIY). Asp183 lines the (6R)-5,10-methylene-5,6,7,8-tetrahydrofolate pocket. (6R)-5,10-methylene-5,6,7,8-tetrahydrofolate is bound at residue Ala282.

It belongs to the thymidylate synthase family. Bacterial-type ThyA subfamily. Homodimer.

The protein localises to the cytoplasm. The enzyme catalyses dUMP + (6R)-5,10-methylene-5,6,7,8-tetrahydrofolate = 7,8-dihydrofolate + dTMP. Its pathway is pyrimidine metabolism; dTTP biosynthesis. Functionally, catalyzes the reductive methylation of 2'-deoxyuridine-5'-monophosphate (dUMP) to 2'-deoxythymidine-5'-monophosphate (dTMP) while utilizing 5,10-methylenetetrahydrofolate (mTHF) as the methyl donor and reductant in the reaction, yielding dihydrofolate (DHF) as a by-product. This enzymatic reaction provides an intracellular de novo source of dTMP, an essential precursor for DNA biosynthesis. The sequence is that of Thymidylate synthase from Shewanella frigidimarina (strain NCIMB 400).